Reading from the N-terminus, the 394-residue chain is 5-azacytidine-induced protein 2 (394 aa).

Positions 1-197 are homodimerization; sequence MDALVEDDIC…IELRKAKQTD (197 aa). Coiled-coil stretches lie at residues 40–76 and 102–196; these read ALVTAYEDIKKRLKDSEKENSLLKKRIRFLEEKLIAR and DRDN…AKQT. The segment at 216–257 is interaction with TBK1 and IKBKE; the sequence is SDNMQHAYWELKREMSNLHLVTQVQAELLRKLKTSTAIKKAC. A phosphoserine mark is found at S318 and S355. The interval 355–379 is disordered; it reads SPPKSSETAFGETKSKTLPLPNLPP.

As to quaternary structure, homodimer. Interacts with IKBKE, TBK1 and TICAM1. Interacts with TAX1BP1. Interacts with CALCOCO2. Post-translationally, ubiquitinated via 'Lys-48'-linked polyubiquitination by TRIM38, leading to its degradation.

The protein localises to the cytoplasm. In terms of biological role, adapter protein which binds TBK1 and IKBKE playing a role in antiviral innate immunity. Activates serine/threonine-protein kinase TBK1 and facilitates its oligomerization. Enhances the phosphorylation of NF-kappa-B p65 subunit RELA by TBK1. Promotes TBK1-induced as well as TNF-alpha or PMA-induced activation of NF-kappa-B. Participates in IFNB promoter activation via TICAM1. The polypeptide is 5-azacytidine-induced protein 2 (AZI2) (Macaca fascicularis (Crab-eating macaque)).